The chain runs to 152 residues: uncharacterized protein (152 aa).

Topologically, residues 1 to 5 (MWFPQ) are cytoplasmic. A helical membrane pass occupies residues 6 to 26 (IIAGMAAGGAASAMTPGKVLF). Over 27–38 (TNALGLGCSRSR) the chain is Extracellular. The helical transmembrane segment at 39 to 59 (GLFLEMFGTAVLCFTVLMTAV) threads the bilayer. The Cytoplasmic portion of the chain corresponds to 60-65 (EKRETN). A helical membrane pass occupies residues 66–86 (FMAALPIGISLFMAHMALTGY). Residues 87 to 110 (TGTGVNPARSLGAAVAARYFPHYH) are Extracellular-facing. Residues 92–94 (NPA) carry the NPA motif. Residues 111–131 (WIYWISPLLGAFLAWSVWQLL) traverse the membrane as a helical segment. The Cytoplasmic segment spans residues 132–152 (QILDYTTYVNAEKAAGQKKED).

Belongs to the MIP/aquaporin (TC 1.A.8) family.

The protein localises to the membrane. This is an uncharacterized protein from Saccharomyces cerevisiae (strain YJM789) (Baker's yeast).